We begin with the raw amino-acid sequence, 294 residues long: tRNA dimethylallyltransferase (294 aa).

10–17 (GPTAVGKT) contributes to the ATP binding site. 12 to 17 (TAVGKT) is a binding site for substrate. Residues 35–38 (DSQQ) are interaction with substrate tRNA.

Belongs to the IPP transferase family. Monomer. The cofactor is Mg(2+).

It catalyses the reaction adenosine(37) in tRNA + dimethylallyl diphosphate = N(6)-dimethylallyladenosine(37) in tRNA + diphosphate. Functionally, catalyzes the transfer of a dimethylallyl group onto the adenine at position 37 in tRNAs that read codons beginning with uridine, leading to the formation of N6-(dimethylallyl)adenosine (i(6)A). The protein is tRNA dimethylallyltransferase of Streptococcus pneumoniae (strain Taiwan19F-14).